The following is a 322-amino-acid chain: Lipoyl synthase (322 aa).

Residues 1–25 (MSQRITIDHRSAPALRHPEKAHRPD) are compositionally biased toward basic and acidic residues. The interval 1–29 (MSQRITIDHRSAPALRHPEKAHRPDNPIQ) is disordered. Residues Cys-61, Cys-66, Cys-72, Cys-87, Cys-91, Cys-94, and Ser-300 each coordinate [4Fe-4S] cluster. Residues 73–289 (WSQRHATMMI…AAAARSKGFL (217 aa)) enclose the Radical SAM core domain.

Belongs to the radical SAM superfamily. Lipoyl synthase family. The cofactor is [4Fe-4S] cluster.

The protein localises to the cytoplasm. The catalysed reaction is [[Fe-S] cluster scaffold protein carrying a second [4Fe-4S](2+) cluster] + N(6)-octanoyl-L-lysyl-[protein] + 2 oxidized [2Fe-2S]-[ferredoxin] + 2 S-adenosyl-L-methionine + 4 H(+) = [[Fe-S] cluster scaffold protein] + N(6)-[(R)-dihydrolipoyl]-L-lysyl-[protein] + 4 Fe(3+) + 2 hydrogen sulfide + 2 5'-deoxyadenosine + 2 L-methionine + 2 reduced [2Fe-2S]-[ferredoxin]. It participates in protein modification; protein lipoylation via endogenous pathway; protein N(6)-(lipoyl)lysine from octanoyl-[acyl-carrier-protein]: step 2/2. Functionally, catalyzes the radical-mediated insertion of two sulfur atoms into the C-6 and C-8 positions of the octanoyl moiety bound to the lipoyl domains of lipoate-dependent enzymes, thereby converting the octanoylated domains into lipoylated derivatives. The sequence is that of Lipoyl synthase from Gluconobacter oxydans (strain 621H) (Gluconobacter suboxydans).